The following is a 229-amino-acid chain: Octanoyltransferase (229 aa).

A BPL/LPL catalytic domain is found at 47 to 225 (PSSPEAVWIL…SLAARFHLAW (179 aa)). Residues 89–96 (RGGEVTHH), 156–158 (AIG), and 169–171 (GLA) each bind substrate. The Acyl-thioester intermediate role is filled by Cys-187.

It belongs to the LipB family.

It localises to the cytoplasm. It catalyses the reaction octanoyl-[ACP] + L-lysyl-[protein] = N(6)-octanoyl-L-lysyl-[protein] + holo-[ACP] + H(+). The protein operates within protein modification; protein lipoylation via endogenous pathway; protein N(6)-(lipoyl)lysine from octanoyl-[acyl-carrier-protein]: step 1/2. Functionally, catalyzes the transfer of endogenously produced octanoic acid from octanoyl-acyl-carrier-protein onto the lipoyl domains of lipoate-dependent enzymes. Lipoyl-ACP can also act as a substrate although octanoyl-ACP is likely to be the physiological substrate. The sequence is that of Octanoyltransferase from Synechococcus sp. (strain CC9902).